The primary structure comprises 449 residues: Ribosomal protein uS12 methylthiotransferase RimO (449 aa).

Residues 15 to 125 enclose the MTTase N-terminal domain; it reads PRISFVSLGC…VLAAVHEAVP (111 aa). Positions 24, 60, 89, 156, 160, and 163 each coordinate [4Fe-4S] cluster. The Radical SAM core domain maps to 142-379; it reads LTPRHYAYLK…MRTQQKVSAR (238 aa). The TRAM domain maps to 382–448; that stretch reads KRKVGTRQSV…PYDLSGTAVG (67 aa).

This sequence belongs to the methylthiotransferase family. RimO subfamily. [4Fe-4S] cluster serves as cofactor.

Its subcellular location is the cytoplasm. The enzyme catalyses L-aspartate(89)-[ribosomal protein uS12]-hydrogen + (sulfur carrier)-SH + AH2 + 2 S-adenosyl-L-methionine = 3-methylsulfanyl-L-aspartate(89)-[ribosomal protein uS12]-hydrogen + (sulfur carrier)-H + 5'-deoxyadenosine + L-methionine + A + S-adenosyl-L-homocysteine + 2 H(+). In terms of biological role, catalyzes the methylthiolation of an aspartic acid residue of ribosomal protein uS12. In Xanthobacter autotrophicus (strain ATCC BAA-1158 / Py2), this protein is Ribosomal protein uS12 methylthiotransferase RimO.